Consider the following 874-residue polypeptide: Coatomer subunit gamma-1 (874 aa).

Residues 1–11 show a composition bias toward basic and acidic residues; it reads MLKKFDKKDEE. The segment at 1-21 is disordered; it reads MLKKFDKKDEESGGGSNPLQH. 4 HEAT repeats span residues 64 to 101, 283 to 320, 322 to 355, and 356 to 392; these read TEATEAFFAMTKLFQSNDPTLRRMCYLTIKEMSCIAED, KELAPAVSVLQLFCSSPKAALRYAAVRTLNKVAMKHPS, VTACNLDLENLVTDSNRSIATLAITTLLKTGSES, and SIDRLMKQISSFMSEISDEFKVVVVQAISALCQKYPR. Position 594 is a phosphothreonine (Thr594). The segment at 609–874 is interaction with ZNF289/ARFGAP2; sequence RQEIFQEQLA…PVDIILASVG (266 aa).

It belongs to the COPG family. As to quaternary structure, oligomeric complex that consists of at least the alpha, beta, beta', gamma, delta, epsilon and zeta subunits. Interacts with ZNF289/ARFGAP2 through its C-terminal appendage domain. Interacts with EGFR upon EGF treatment; interaction is essential for regulation of EGF-dependent nuclear transport of EGFR by retrograde trafficking from the Golgi to the ER. The coatomer interacts with KDEL receptors; the interaction is important for retrograde trafficking of KDEL-bearing proteins from the Golgi to the endoplasmic reticulum. Interacts with COPB1. Interacts with TMED10 (via C-terminus). Interacts with TMED2, TMED3, TMED7 and TMED9.

It localises to the cytoplasm. Its subcellular location is the cytosol. The protein localises to the golgi apparatus membrane. The protein resides in the cytoplasmic vesicle. It is found in the COPI-coated vesicle membrane. The coatomer is a cytosolic protein complex that binds to dilysine motifs and reversibly associates with Golgi non-clathrin-coated vesicles, which further mediate biosynthetic protein transport from the ER, via the Golgi up to the trans Golgi network. Coatomer complex is required for budding from Golgi membranes, and is essential for the retrograde Golgi-to-ER transport of dilysine-tagged proteins. In mammals, the coatomer can only be recruited by membranes associated to ADP-ribosylation factors (ARFs), which are small GTP-binding proteins; the complex also influences the Golgi structural integrity, as well as the processing, activity, and endocytic recycling of LDL receptors. Required for limiting lipid storage in lipid droplets. Involved in lipid homeostasis by regulating the presence of perilipin family members PLIN2 and PLIN3 at the lipid droplet surface and promoting the association of adipocyte triglyceride lipase (PNPLA2) with the lipid droplet surface to mediate lipolysis. The protein is Coatomer subunit gamma-1 (Copg1) of Rattus norvegicus (Rat).